Consider the following 95-residue polypeptide: Co-chaperonin GroES (95 aa).

The protein belongs to the GroES chaperonin family. In terms of assembly, heptamer of 7 subunits arranged in a ring. Interacts with the chaperonin GroEL.

It is found in the cytoplasm. Together with the chaperonin GroEL, plays an essential role in assisting protein folding. The GroEL-GroES system forms a nano-cage that allows encapsulation of the non-native substrate proteins and provides a physical environment optimized to promote and accelerate protein folding. GroES binds to the apical surface of the GroEL ring, thereby capping the opening of the GroEL channel. The chain is Co-chaperonin GroES from Bordetella avium (strain 197N).